Here is a 105-residue protein sequence, read N- to C-terminus: Endogenous retrovirus group K member 6 Rec protein (105 aa).

Residues 1–49 (MNPSEMQRKAPPRRRRHRNRAPLTHKMNKMVTSEEQMKLPSTKKAEPPT) form a disordered region. Positions 10–20 (APPRRRRHRNR) are enriched in basic residues. The Nuclear localization signal signature appears at 13–20 (RRRRHRNR). Residues 50–59 (WAQLKKLTQL) carry the Nuclear export signal motif.

Forms homodimers, homotrimers, and homotetramers via a C-terminal domain. Associates with XPO1 and with ZNF145. Expressed at higher level in placenta, expressed at lower level in several organs and cell lines.

Its subcellular location is the cytoplasm. The protein localises to the nucleus. It is found in the nucleolus. Retroviral replication requires the nuclear export and translation of unspliced, singly-spliced and multiply-spliced derivatives of the initial genomic transcript. Rec interacts with a highly structured RNA element (RcRE) present in the viral 3'LTR and recruits the cellular nuclear export machinery. This permits export to the cytoplasm of unspliced genomic or incompletely spliced subgenomic viral transcripts. In Homo sapiens (Human), this protein is Endogenous retrovirus group K member 6 Rec protein (ERVK-6).